The primary structure comprises 625 residues: Probable potassium transport system protein Kup (625 aa).

A run of 12 helical transmembrane segments spans residues 13–33, 53–73, 103–123, 141–161, 172–192, 206–226, 250–270, 282–302, 340–360, 369–389, 400–420, and 422–442; these read TALA…LYAL, ILSI…VAIV, IYMI…GIIT, VFDP…FLVQ, FGPI…HSVI, AIQF…AVVL, WFFV…ALLL, LLVP…ATVI, IYVP…ILIF, AYGL…AVFI, VLLL…ATSL, and ILSG…ILMT.

This sequence belongs to the HAK/KUP transporter (TC 2.A.72) family.

It is found in the cell inner membrane. The enzyme catalyses K(+)(in) + H(+)(in) = K(+)(out) + H(+)(out). Functionally, transport of potassium into the cell. Likely operates as a K(+):H(+) symporter. The chain is Probable potassium transport system protein Kup from Acinetobacter baumannii (strain AYE).